A 419-amino-acid polypeptide reads, in one-letter code: Altered inheritance of mitochondria protein 6 (419 aa).

The N-terminal stretch at 1–31 (MLPPFIVAGLFSSYILIMGLMFSQISHVSNS) is a signal peptide.

Belongs to the AIM6 family.

The sequence is that of Altered inheritance of mitochondria protein 6 (AIM6) from Kluyveromyces lactis (strain ATCC 8585 / CBS 2359 / DSM 70799 / NBRC 1267 / NRRL Y-1140 / WM37) (Yeast).